We begin with the raw amino-acid sequence, 330 residues long: 2-keto-3-deoxygluconate permease (330 aa).

The next 10 helical transmembrane spans lie at 10-30 (VPGGMMIIPLFLGAALNTFAP), 42-62 (ALITGTLPILGVFIFCVGATI), 77-97 (LLLGKIGFAALLGVIAAQFIP), 100-120 (GIQSGFFAGLSVLAIVAVMNE), 140-160 (GAFAFISTESGPFMTMVTFGV), 163-183 (LAAFPWETLAATVIPFLLGCI), 200-220 (PAIIPFFAFSLGNTLNFGMLI), 224-244 (LLGIFIGVSVVILSGSSLFLL), 254-274 (VAGVAASSTAGAAVAVPYALA), and 289-309 (AIIATSVIVTSLLTPLATVWV).

This sequence belongs to the KdgT transporter family.

The protein resides in the cell membrane. The catalysed reaction is 2-dehydro-3-deoxy-D-gluconate(in) + H(+)(in) = 2-dehydro-3-deoxy-D-gluconate(out) + H(+)(out). Functionally, catalyzes the proton-dependent uptake of 2-keto-3-deoxygluconate (KDG) into the cell. In Bacillus subtilis (strain 168), this protein is 2-keto-3-deoxygluconate permease.